The sequence spans 83 residues: MSSGGLLLLLGLLTLWEGLTPVSSKDRPHFCHLPHDPGPCKGNFQAFYYHPVRRTCLEFIYGGCQGNPNNFKTIDECKRTCAA.

Residues 1–24 form the signal peptide; the sequence is MSSGGLLLLLGLLTLWEGLTPVSS. A BPTI/Kunitz inhibitor domain is found at 31–81; sequence CHLPHDPGPCKGNFQAFYYHPVRRTCLEFIYGGCQGNPNNFKTIDECKRTC. Cystine bridges form between Cys31–Cys81, Cys40–Cys64, and Cys56–Cys77.

Belongs to the venom Kunitz-type family. Expressed by the venom gland.

The protein resides in the secreted. Functionally, serine protease inhibitor that acts against trypsin (EC(50)=10 nM, Ki=5nM), chymotrypsin (EC(50)=100 nM, Ki=40 nM), and plasmin (EC(50)=100 nM, Ki=40 nM). This is Kunitz serine protease inhibitor Pr-mulgin 2 from Pseudechis rossignolii (Papuan pigmy mulga snake).